Reading from the N-terminus, the 255-residue chain is MILLLAGTSDARALAVQVKKAGYDVTATVVTDNAAIELQRAEVKVKIGRLTKEDMTDFINEHGVKAIVDASHPFAEEASKNAIGAAAETAIPYIRYERASQAFTYDNMTMVSTYEEAAEVAAEKKGVIMLTTGSKTLQVFTEKLLPLSDVRLVARMLPRLDNMEKCQQLGLPQKNIIAIQGPFTKEFDRALYKQYGVTVMVTKESGKVGSVDKKVEAAKELGLDIIMIGRPKIEYGTVYSTFEEVVHALVNQTRS.

It belongs to the precorrin-6x reductase family.

It carries out the reaction Co-precorrin-6B + NAD(+) = Co-precorrin-6A + NADH + H(+). The protein operates within cofactor biosynthesis; adenosylcobalamin biosynthesis; cob(II)yrinate a,c-diamide from sirohydrochlorin (anaerobic route): step 7/10. Catalyzes the reduction of the macrocycle of cobalt-precorrin-6A to cobalt-precorrin-6B. This chain is Cobalt-precorrin-6A reductase (cbiJ), found in Priestia megaterium (Bacillus megaterium).